Here is an 86-residue protein sequence, read N- to C-terminus: Small ribosomal subunit protein uS17 (86 aa).

This sequence belongs to the universal ribosomal protein uS17 family. Part of the 30S ribosomal subunit.

Functionally, one of the primary rRNA binding proteins, it binds specifically to the 5'-end of 16S ribosomal RNA. The chain is Small ribosomal subunit protein uS17 from Desulfotalea psychrophila (strain LSv54 / DSM 12343).